We begin with the raw amino-acid sequence, 508 residues long: NADH-quinone oxidoreductase subunit N 1 (508 aa).

Helical transmembrane passes span Ile-2–Leu-22, Ala-47–Val-67, Phe-87–Gly-107, Phe-126–Gly-146, Phe-175–Ala-195, Ala-220–Val-240, Phe-260–Ala-280, Ala-291–Ile-311, Met-321–Val-341, Val-351–Leu-371, Ala-396–Phe-416, Tyr-431–Val-453, and Leu-479–Ile-499.

This sequence belongs to the complex I subunit 2 family. As to quaternary structure, NDH-1 is composed of 14 different subunits. Subunits NuoA, H, J, K, L, M, N constitute the membrane sector of the complex.

The protein localises to the cell inner membrane. It carries out the reaction a quinone + NADH + 5 H(+)(in) = a quinol + NAD(+) + 4 H(+)(out). NDH-1 shuttles electrons from NADH, via FMN and iron-sulfur (Fe-S) centers, to quinones in the respiratory chain. The immediate electron acceptor for the enzyme in this species is believed to be ubiquinone. Couples the redox reaction to proton translocation (for every two electrons transferred, four hydrogen ions are translocated across the cytoplasmic membrane), and thus conserves the redox energy in a proton gradient. The protein is NADH-quinone oxidoreductase subunit N 1 of Sorangium cellulosum (strain So ce56) (Polyangium cellulosum (strain So ce56)).